The primary structure comprises 122 residues: Small ribosomal subunit protein uS13 (122 aa).

The disordered stretch occupies residues 93 to 122 (RRGLPVRGQRTKTNARTRKGPKKTIAGKKK).

It belongs to the universal ribosomal protein uS13 family. As to quaternary structure, part of the 30S ribosomal subunit. Forms a loose heterodimer with protein S19. Forms two bridges to the 50S subunit in the 70S ribosome.

Functionally, located at the top of the head of the 30S subunit, it contacts several helices of the 16S rRNA. In the 70S ribosome it contacts the 23S rRNA (bridge B1a) and protein L5 of the 50S subunit (bridge B1b), connecting the 2 subunits; these bridges are implicated in subunit movement. Contacts the tRNAs in the A and P-sites. The protein is Small ribosomal subunit protein uS13 of Corynebacterium efficiens (strain DSM 44549 / YS-314 / AJ 12310 / JCM 11189 / NBRC 100395).